A 33-amino-acid polypeptide reads, in one-letter code: Suppressor protein HFN40 (33 aa).

Functionally, suppresses expansion of husk leaf blades. This Zea mays (Maize) protein is Suppressor protein HFN40.